Here is a 375-residue protein sequence, read N- to C-terminus: Succinyl-diaminopimelate desuccinylase (375 aa).

His66 is a binding site for Zn(2+). Residue Asp68 is part of the active site. Asp99 contributes to the Zn(2+) binding site. Glu133 acts as the Proton acceptor in catalysis. Glu134, Glu162, and His348 together coordinate Zn(2+).

Belongs to the peptidase M20A family. DapE subfamily. In terms of assembly, homodimer. It depends on Zn(2+) as a cofactor. Requires Co(2+) as cofactor.

It carries out the reaction N-succinyl-(2S,6S)-2,6-diaminopimelate + H2O = (2S,6S)-2,6-diaminopimelate + succinate. It participates in amino-acid biosynthesis; L-lysine biosynthesis via DAP pathway; LL-2,6-diaminopimelate from (S)-tetrahydrodipicolinate (succinylase route): step 3/3. Its function is as follows. Catalyzes the hydrolysis of N-succinyl-L,L-diaminopimelic acid (SDAP), forming succinate and LL-2,6-diaminopimelate (DAP), an intermediate involved in the bacterial biosynthesis of lysine and meso-diaminopimelic acid, an essential component of bacterial cell walls. In Salmonella typhi, this protein is Succinyl-diaminopimelate desuccinylase.